A 292-amino-acid chain; its full sequence is Acetyl-coenzyme A carboxylase carboxyl transferase subunit beta (292 aa).

The CoA carboxyltransferase N-terminal domain occupies methionine 36–glutamate 292. Residues cysteine 40, cysteine 43, cysteine 59, and cysteine 62 each coordinate Zn(2+). The C4-type zinc-finger motif lies at cysteine 40–cysteine 62.

The protein belongs to the AccD/PCCB family. In terms of assembly, acetyl-CoA carboxylase is a heterohexamer composed of biotin carboxyl carrier protein (AccB), biotin carboxylase (AccC) and two subunits each of ACCase subunit alpha (AccA) and ACCase subunit beta (AccD). Requires Zn(2+) as cofactor.

The protein localises to the cytoplasm. It carries out the reaction N(6)-carboxybiotinyl-L-lysyl-[protein] + acetyl-CoA = N(6)-biotinyl-L-lysyl-[protein] + malonyl-CoA. It participates in lipid metabolism; malonyl-CoA biosynthesis; malonyl-CoA from acetyl-CoA: step 1/1. In terms of biological role, component of the acetyl coenzyme A carboxylase (ACC) complex. Biotin carboxylase (BC) catalyzes the carboxylation of biotin on its carrier protein (BCCP) and then the CO(2) group is transferred by the transcarboxylase to acetyl-CoA to form malonyl-CoA. The protein is Acetyl-coenzyme A carboxylase carboxyl transferase subunit beta of Clostridium perfringens (strain ATCC 13124 / DSM 756 / JCM 1290 / NCIMB 6125 / NCTC 8237 / Type A).